A 453-amino-acid chain; its full sequence is Pentatricopeptide repeat-containing protein At2g38420, mitochondrial (453 aa).

A mitochondrion-targeting transit peptide spans 1–77 (MARSSSWHRM…CEPTPQAYRF (77 aa)). PPR repeat units follow at residues 107–141 (PESI…RCVP), 142–177 (SAYT…GVRL), 178–212 (EEST…SVIV), 213–249 (DPRL…RFSP), 250–284 (GLRD…RVEP), 285–319 (DLVC…GLAP), 320–354 (DVYT…GSEP), 355–389 (NVVT…GVNR), and 390–424 (NSHT…NVFV).

The protein belongs to the PPR family. P subfamily.

The protein localises to the mitochondrion. The sequence is that of Pentatricopeptide repeat-containing protein At2g38420, mitochondrial from Arabidopsis thaliana (Mouse-ear cress).